Consider the following 314-residue polypeptide: Lipoyl synthase (314 aa).

Residues C61, C66, C72, C87, C91, C94, and S301 each contribute to the [4Fe-4S] cluster site. The Radical SAM core domain occupies 73-290; that stretch reads FGRGTATFMI…EEEAKKMGFS (218 aa).

It belongs to the radical SAM superfamily. Lipoyl synthase family. [4Fe-4S] cluster is required as a cofactor.

It localises to the cytoplasm. It catalyses the reaction [[Fe-S] cluster scaffold protein carrying a second [4Fe-4S](2+) cluster] + N(6)-octanoyl-L-lysyl-[protein] + 2 oxidized [2Fe-2S]-[ferredoxin] + 2 S-adenosyl-L-methionine + 4 H(+) = [[Fe-S] cluster scaffold protein] + N(6)-[(R)-dihydrolipoyl]-L-lysyl-[protein] + 4 Fe(3+) + 2 hydrogen sulfide + 2 5'-deoxyadenosine + 2 L-methionine + 2 reduced [2Fe-2S]-[ferredoxin]. The protein operates within protein modification; protein lipoylation via endogenous pathway; protein N(6)-(lipoyl)lysine from octanoyl-[acyl-carrier-protein]: step 2/2. Functionally, catalyzes the radical-mediated insertion of two sulfur atoms into the C-6 and C-8 positions of the octanoyl moiety bound to the lipoyl domains of lipoate-dependent enzymes, thereby converting the octanoylated domains into lipoylated derivatives. The polypeptide is Lipoyl synthase (Dechloromonas aromatica (strain RCB)).